The following is a 398-amino-acid chain: Lysophospholipid transporter LplT (398 aa).

12 helical membrane-spanning segments follow: residues Met-16 to Ala-36, Ile-53 to Ala-73, Ala-91 to Val-111, Leu-139 to Ala-159, Ile-163 to Tyr-183, Ser-195 to Trp-213, Leu-227 to Leu-247, Ala-253 to Ala-273, Met-286 to Phe-306, Ala-310 to Leu-330, Ile-344 to Leu-364, and Val-372 to Leu-392.

The protein belongs to the major facilitator superfamily. LplT (TC 2.A.1.42) family.

Its subcellular location is the cell inner membrane. Functionally, catalyzes the facilitated diffusion of 2-acyl-glycero-3-phosphoethanolamine (2-acyl-GPE) into the cell. The sequence is that of Lysophospholipid transporter LplT from Serratia proteamaculans (strain 568).